Consider the following 459-residue polypeptide: Cysteine--tRNA ligase (459 aa).

Cys-28 is a binding site for Zn(2+). The short motif at 30–40 (VTIYDLCHIGH) is the 'HIGH' region element. Zn(2+)-binding residues include Cys-209, His-234, and Glu-238. The 'KMSKS' region signature appears at 266–270 (KMSKS). Lys-269 provides a ligand contact to ATP.

It belongs to the class-I aminoacyl-tRNA synthetase family. In terms of assembly, monomer. The cofactor is Zn(2+).

Its subcellular location is the cytoplasm. It carries out the reaction tRNA(Cys) + L-cysteine + ATP = L-cysteinyl-tRNA(Cys) + AMP + diphosphate. The polypeptide is Cysteine--tRNA ligase (Shewanella piezotolerans (strain WP3 / JCM 13877)).